A 322-amino-acid polypeptide reads, in one-letter code: Probable cardiolipin synthase (CMP-forming) (322 aa).

3 consecutive transmembrane segments (helical) span residues isoleucine 143–glycine 163, leucine 199–phenylalanine 219, and leucine 289–methionine 309.

This sequence belongs to the CDP-alcohol phosphatidyltransferase class-I family.

The protein localises to the mitochondrion inner membrane. It catalyses the reaction a CDP-1,2-diacyl-sn-glycerol + a 1,2-diacyl-sn-glycero-3-phospho-(1'-sn-glycerol) = a cardiolipin + CMP + H(+). Catalyzes the synthesis of cardiolipin (CL) (diphosphatidylglycerol) by specifically transferring a phosphatidyl group from CDP-diacylglycerol to phosphatidylglycerol (PG). CL is a key phospholipid in mitochondrial membranes and plays important roles in maintaining the functional integrity and dynamics of mitochondria under both optimal and stress conditions. The sequence is that of Probable cardiolipin synthase (CMP-forming) (CLS) from Drosophila melanogaster (Fruit fly).